Reading from the N-terminus, the 97-residue chain is Putative regulatory protein Dole_1911 (97 aa).

Belongs to the RemA family.

The chain is Putative regulatory protein Dole_1911 from Desulfosudis oleivorans (strain DSM 6200 / JCM 39069 / Hxd3) (Desulfococcus oleovorans).